The following is a 313-amino-acid chain: Dihydroorotate dehydrogenase (fumarate) (313 aa).

Residues Ala-20 and 44-45 (KS) each bind FMN. Substrate-binding positions include Lys-44, 68 to 72 (NSMGL), and Asn-128. Asn-128 lines the FMN pocket. The active-site Nucleophile is Cys-131. Residue Asn-133 participates in substrate binding. FMN is bound by residues Lys-165 and Val-194. 195-196 (NS) is a binding site for substrate. FMN-binding positions include Gly-223, Cys-249, 249–251 (CGG), and 272–273 (GT).

The protein belongs to the dihydroorotate dehydrogenase family. Type 1 subfamily. In terms of assembly, homodimer. FMN is required as a cofactor.

Its subcellular location is the cytoplasm. It catalyses the reaction (S)-dihydroorotate + fumarate = orotate + succinate. It functions in the pathway pyrimidine metabolism; UMP biosynthesis via de novo pathway. Catalyzes the conversion of dihydroorotate to orotate with fumarate as the electron acceptor. Molecular oxygen can replace fumarate in vitro. The polypeptide is Dihydroorotate dehydrogenase (fumarate) (Trypanosoma brucei brucei (strain 927/4 GUTat10.1)).